Here is a 306-residue protein sequence, read N- to C-terminus: Palmitoyl-protein thioesterase 1 (306 aa).

The N-terminal stretch at 1-27 (MASPGCLWLLAVALLPWTCASRALQHL) is a signal peptide. Cys6 carries S-palmitoyl cysteine; by ZDHHC3 and ZDHHC7 lipidation. Disulfide bonds link Cys45–Cys46, Cys96–Cys128, and Cys152–Cys160. The active site involves Ser115. Residues Asn197, Asn212, and Asn232 are each glycosylated (N-linked (GlcNAc...) asparagine). Catalysis depends on residues Asp233 and His289.

It belongs to the palmitoyl-protein thioesterase family. In terms of assembly, interacts with CLN5. Interacts with ATP5F1A and ATP5F1B. Glycosylated.

It is found in the lysosome. Its subcellular location is the secreted. It localises to the golgi apparatus. The protein resides in the endoplasmic reticulum. It catalyses the reaction S-hexadecanoyl-L-cysteinyl-[protein] + H2O = L-cysteinyl-[protein] + hexadecanoate + H(+). It carries out the reaction hexadecanoyl-CoA + H2O = hexadecanoate + CoA + H(+). The enzyme catalyses S-hexadecanoyl-N-acetylcysteamine + H2O = N-acetylcysteamine + hexadecanoate + H(+). The catalysed reaction is S-hexadecanoyl-N-acetylcysteine methyl ester + H2O = N-acetylcysteine methyl ester + hexadecanoate + H(+). Its activity is regulated as follows. Palmitoylation reduces PPT1 enzymatic activity. In terms of biological role, has thioesterase activity against fatty acid thioesters with 14 -18 carbons, including palmitoyl-CoA, S-palmitoyl-N-acetylcysteamine, and palmitoylated proteins. In contrast to PPT2, PPT1 can hydrolyze palmitoylated proteins and palmitoylcysteine. The protein is Palmitoyl-protein thioesterase 1 (PPT1) of Homo sapiens (Human).